A 260-amino-acid chain; its full sequence is Thiazole synthase (260 aa).

The Schiff-base intermediate with DXP role is filled by Lys-96. Residues Gly-157, 184–185, and 206–207 contribute to the 1-deoxy-D-xylulose 5-phosphate site; these read AG and NT.

This sequence belongs to the ThiG family. As to quaternary structure, homotetramer. Forms heterodimers with either ThiH or ThiS.

It is found in the cytoplasm. It carries out the reaction [ThiS sulfur-carrier protein]-C-terminal-Gly-aminoethanethioate + 2-iminoacetate + 1-deoxy-D-xylulose 5-phosphate = [ThiS sulfur-carrier protein]-C-terminal Gly-Gly + 2-[(2R,5Z)-2-carboxy-4-methylthiazol-5(2H)-ylidene]ethyl phosphate + 2 H2O + H(+). It participates in cofactor biosynthesis; thiamine diphosphate biosynthesis. Catalyzes the rearrangement of 1-deoxy-D-xylulose 5-phosphate (DXP) to produce the thiazole phosphate moiety of thiamine. Sulfur is provided by the thiocarboxylate moiety of the carrier protein ThiS. In vitro, sulfur can be provided by H(2)S. The polypeptide is Thiazole synthase (Rhodopseudomonas palustris (strain ATCC BAA-98 / CGA009)).